The chain runs to 126 residues: Glycine cleavage system H protein (126 aa).

The Lipoyl-binding domain occupies 24–105; the sequence is TLTVGITDHA…AYGVWLFKIK (82 aa). An N6-lipoyllysine modification is found at Lys-65.

Belongs to the GcvH family. In terms of assembly, the glycine cleavage system is composed of four proteins: P, T, L and H. (R)-lipoate is required as a cofactor.

Its function is as follows. The glycine cleavage system catalyzes the degradation of glycine. The H protein shuttles the methylamine group of glycine from the P protein to the T protein. This Burkholderia cenocepacia (strain HI2424) protein is Glycine cleavage system H protein.